Consider the following 116-residue polypeptide: Iron-sulfur cluster insertion protein ErpA (116 aa).

Residues C44, C108, and C110 each contribute to the iron-sulfur cluster site.

It belongs to the HesB/IscA family. In terms of assembly, homodimer. Iron-sulfur cluster is required as a cofactor.

Its function is as follows. Required for insertion of 4Fe-4S clusters for at least IspG. This Francisella philomiragia subsp. philomiragia (strain ATCC 25017 / CCUG 19701 / FSC 153 / O#319-036) protein is Iron-sulfur cluster insertion protein ErpA.